The primary structure comprises 451 residues: ATP-dependent protease ATPase subunit HslU (451 aa).

ATP contacts are provided by residues Ile26, 68–73 (GVGKTE), Asp263, Glu328, and Arg400.

This sequence belongs to the ClpX chaperone family. HslU subfamily. In terms of assembly, a double ring-shaped homohexamer of HslV is capped on each side by a ring-shaped HslU homohexamer. The assembly of the HslU/HslV complex is dependent on binding of ATP.

It localises to the cytoplasm. In terms of biological role, ATPase subunit of a proteasome-like degradation complex; this subunit has chaperone activity. The binding of ATP and its subsequent hydrolysis by HslU are essential for unfolding of protein substrates subsequently hydrolyzed by HslV. HslU recognizes the N-terminal part of its protein substrates and unfolds these before they are guided to HslV for hydrolysis. The polypeptide is ATP-dependent protease ATPase subunit HslU (Dichelobacter nodosus (strain VCS1703A)).